The primary structure comprises 310 residues: Carbamate kinase-like protein YqeA (310 aa).

This sequence belongs to the carbamate kinase family.

This Escherichia coli (strain K12) protein is Carbamate kinase-like protein YqeA (yqeA).